We begin with the raw amino-acid sequence, 784 residues long: Probable aminopeptidase 1 (784 aa).

Residues E103 and 236–240 (GAMEN) each bind substrate. H271 provides a ligand contact to Zn(2+). E272 acts as the Proton acceptor in catalysis. The Zn(2+) site is built by H275 and E294.

Belongs to the peptidase M1 family. Zn(2+) serves as cofactor.

The protein localises to the cytoplasm. This Saccharolobus solfataricus (strain ATCC 35092 / DSM 1617 / JCM 11322 / P2) (Sulfolobus solfataricus) protein is Probable aminopeptidase 1 (ape1).